Reading from the N-terminus, the 330-residue chain is 4-hydroxythreonine-4-phosphate dehydrogenase (330 aa).

Substrate-binding residues include His-135 and Thr-136. Positions 165, 210, and 266 each coordinate a divalent metal cation. Residues Lys-274, Asn-283, and Arg-292 each contribute to the substrate site.

It belongs to the PdxA family. As to quaternary structure, homodimer. Zn(2+) serves as cofactor. Mg(2+) is required as a cofactor. The cofactor is Co(2+).

It is found in the cytoplasm. It carries out the reaction 4-(phosphooxy)-L-threonine + NAD(+) = 3-amino-2-oxopropyl phosphate + CO2 + NADH. The protein operates within cofactor biosynthesis; pyridoxine 5'-phosphate biosynthesis; pyridoxine 5'-phosphate from D-erythrose 4-phosphate: step 4/5. Catalyzes the NAD(P)-dependent oxidation of 4-(phosphooxy)-L-threonine (HTP) into 2-amino-3-oxo-4-(phosphooxy)butyric acid which spontaneously decarboxylates to form 3-amino-2-oxopropyl phosphate (AHAP). This is 4-hydroxythreonine-4-phosphate dehydrogenase from Vibrio cholerae serotype O1 (strain ATCC 39315 / El Tor Inaba N16961).